A 242-amino-acid chain; its full sequence is 1-(5-phosphoribosyl)-5-[(5-phosphoribosylamino)methylideneamino] imidazole-4-carboxamide isomerase (242 aa).

The active-site Proton acceptor is the aspartate 8. Aspartate 129 serves as the catalytic Proton donor.

This sequence belongs to the HisA/HisF family.

It localises to the cytoplasm. The enzyme catalyses 1-(5-phospho-beta-D-ribosyl)-5-[(5-phospho-beta-D-ribosylamino)methylideneamino]imidazole-4-carboxamide = 5-[(5-phospho-1-deoxy-D-ribulos-1-ylimino)methylamino]-1-(5-phospho-beta-D-ribosyl)imidazole-4-carboxamide. It functions in the pathway amino-acid biosynthesis; L-histidine biosynthesis; L-histidine from 5-phospho-alpha-D-ribose 1-diphosphate: step 4/9. The chain is 1-(5-phosphoribosyl)-5-[(5-phosphoribosylamino)methylideneamino] imidazole-4-carboxamide isomerase from Syntrophus aciditrophicus (strain SB).